A 162-amino-acid polypeptide reads, in one-letter code: Probable tRNA (guanine(10)-N2)-dimethyltransferase (162 aa).

Belongs to the methyltransferase superfamily. Trm-G10 family. In terms of assembly, monomer.

Its subcellular location is the cytoplasm. It catalyses the reaction guanosine(10) in tRNA + 2 S-adenosyl-L-methionine = N(2)-dimethylguanosine(10) in tRNA + 2 S-adenosyl-L-homocysteine + 2 H(+). Catalyzes the adenosylmethionine-dependent methylation of the exocyclic amino group (N(2)) of guanosine at position 10 of various tRNAs. Acts via a two-step process that leads to the formation of either N(2)-monomethyl (m(2)G) or N(2)-dimethylguanosine (m(2)(2)G). This is Probable tRNA (guanine(10)-N2)-dimethyltransferase (trmG10) from Methanothermococcus thermolithotrophicus (Methanococcus thermolithotrophicus).